Reading from the N-terminus, the 216-residue chain is Ribosomal RNA small subunit methyltransferase G (216 aa).

S-adenosyl-L-methionine is bound by residues G81, F86, 130-131 (AE), and R144.

The protein belongs to the methyltransferase superfamily. RNA methyltransferase RsmG family.

Its subcellular location is the cytoplasm. The enzyme catalyses guanosine(527) in 16S rRNA + S-adenosyl-L-methionine = N(7)-methylguanosine(527) in 16S rRNA + S-adenosyl-L-homocysteine. Its function is as follows. Specifically methylates the N7 position of guanine in position 527 of 16S rRNA. This is Ribosomal RNA small subunit methyltransferase G from Rhodospirillum centenum (strain ATCC 51521 / SW).